A 340-amino-acid polypeptide reads, in one-letter code: Mitochondrial calcium uniporter regulator 1 (340 aa).

The interval 1 to 44 (MDSGSVAAERPRRTPSRQRLPSSGCGVPARPGVSTLPGGRSWLR) is disordered. Residues 1 to 54 (MDSGSVAAERPRRTPSRQRLPSSGCGVPARPGVSTLPGGRSWLRPRGRAARASP) lie on the Mitochondrial intermembrane side of the membrane. The helical transmembrane segment at 55 to 74 (LLFLLLVPSPRLAATATATA) threads the bilayer. Topologically, residues 75–316 (PRRTLAERSR…KTMLEAHKLD (242 aa)) are mitochondrial matrix. The stretch at 197–291 (ALQQVLSKIA…VSLHAQQDRA (95 aa)) forms a coiled coil. Lys204 carries the N6-acetyllysine modification. A helical transmembrane segment spans residues 317-339 (TIKYLAGSVFTCLTVALGFYRLW). A topological domain (mitochondrial intermembrane) is located at residue Ile340.

The protein belongs to the CCDC90 family. Interacts (via coiled coil regions) with MCU; the interaction is direct. Interacts with SMDT1/EMRE; the interaction is direct. Interacts with PPIF.

It localises to the mitochondrion inner membrane. Functionally, key regulator of mitochondrial calcium uniporter (MCU) required for calcium entry into mitochondrion. Plays a direct role in uniporter-mediated calcium uptake via a direct interaction with MCU. Probably involved in the assembly of the membrane components of the uniporter complex (uniplex). The polypeptide is Mitochondrial calcium uniporter regulator 1 (Mus musculus (Mouse)).